A 349-amino-acid polypeptide reads, in one-letter code: Dihydroorotate dehydrogenase (quinone) (349 aa).

FMN-binding positions include 59-63 (PGFDK) and Thr83. Lys63 contributes to the substrate binding site. 108–112 (NRMGF) lines the substrate pocket. Asn142 and Asn173 together coordinate FMN. Asn173 provides a ligand contact to substrate. Ser176 (nucleophile) is an active-site residue. Asn178 serves as a coordination point for substrate. FMN is bound by residues Lys212 and Ser240. 241 to 242 (NT) serves as a coordination point for substrate. Residues Gly262, Gly291, and 312 to 313 (YS) each bind FMN.

Belongs to the dihydroorotate dehydrogenase family. Type 2 subfamily. Monomer. The cofactor is FMN.

The protein resides in the cell membrane. The enzyme catalyses (S)-dihydroorotate + a quinone = orotate + a quinol. The protein operates within pyrimidine metabolism; UMP biosynthesis via de novo pathway; orotate from (S)-dihydroorotate (quinone route): step 1/1. Its function is as follows. Catalyzes the conversion of dihydroorotate to orotate with quinone as electron acceptor. The polypeptide is Dihydroorotate dehydrogenase (quinone) (Novosphingobium aromaticivorans (strain ATCC 700278 / DSM 12444 / CCUG 56034 / CIP 105152 / NBRC 16084 / F199)).